Here is a 130-residue protein sequence, read N- to C-terminus: Small ribosomal subunit protein uS9 (130 aa).

This sequence belongs to the universal ribosomal protein uS9 family.

This chain is Small ribosomal subunit protein uS9, found in Carboxydothermus hydrogenoformans (strain ATCC BAA-161 / DSM 6008 / Z-2901).